The sequence spans 550 residues: Hydroxylamine reductase (550 aa).

Positions 3, 6, 18, and 25 each coordinate [2Fe-2S] cluster. Hybrid [4Fe-2O-2S] cluster contacts are provided by histidine 249, glutamate 273, cysteine 317, cysteine 405, cysteine 433, cysteine 458, glutamate 492, and lysine 494. Cysteine 405 bears the Cysteine persulfide mark.

This sequence belongs to the HCP family. [2Fe-2S] cluster serves as cofactor. Requires hybrid [4Fe-2O-2S] cluster as cofactor.

Its subcellular location is the cytoplasm. It catalyses the reaction A + NH4(+) + H2O = hydroxylamine + AH2 + H(+). Functionally, catalyzes the reduction of hydroxylamine to form NH(3) and H(2)O. This Escherichia coli O139:H28 (strain E24377A / ETEC) protein is Hydroxylamine reductase.